A 184-amino-acid chain; its full sequence is Lactoylglutathione lyase (184 aa).

Ala2 is modified (N-acetylalanine). A disulfide bridge links Cys19 with Cys20. Residues 31-177 (LLQQTMLRIK…DGYWIEILNP (147 aa)) form the VOC domain. The substrate site is built by Gln34 and Arg38. Gln34 is a binding site for Zn(2+). Residue Lys88 is modified to N6-succinyllysine. Glu100 lines the Zn(2+) pocket. A substrate-binding site is contributed by Asn104. The residue at position 107 (Thr107) is a Phosphothreonine. Substrate is bound by residues Arg123 and His127. Zn(2+) is bound at residue His127. Cys139 is modified (S-glutathionyl cysteine). At Lys148 the chain carries N6-acetyllysine; alternate. Lys148 is subject to N6-succinyllysine; alternate. 157-158 (KM) serves as a coordination point for substrate. Position 173 (Glu173) interacts with Zn(2+). The Proton donor/acceptor role is filled by Glu173.

The protein belongs to the glyoxalase I family. In terms of assembly, homodimer. The cofactor is Zn(2+). Glutathionylation at Cys-139 inhibits enzyme activity. Post-translationally, phosphorylated at Thr-107 in the presence of CaMK2. However, this is a consensus site for phosphorylation by CK2 so phosphorylation may be mediated by CK2 rather than CaMK2. Phosphorylation is induced by TNF and suppresses the TNF-induced transcriptional activity of NF-kappa-B. In terms of processing, exists in a nitric oxide (NO)-modified form. The exact nature of the modification is unknown, but it suppresses the TNF-induced transcriptional activity of NF-kappa-B.

The catalysed reaction is (R)-S-lactoylglutathione = methylglyoxal + glutathione. The protein operates within secondary metabolite metabolism; methylglyoxal degradation; (R)-lactate from methylglyoxal: step 1/2. With respect to regulation, subject to competitive inhibition by methyl-gerfelin. In terms of biological role, catalyzes the conversion of hemimercaptal, formed from methylglyoxal and glutathione, to S-lactoylglutathione. Involved in the regulation of TNF-induced transcriptional activity of NF-kappa-B. Required for normal osteoclastogenesis. This is Lactoylglutathione lyase (Glo1) from Mus musculus (Mouse).